The sequence spans 444 residues: Tubulin beta-7 chain (444 aa).

The GTP site is built by glutamine 11, glutamate 69, serine 138, glycine 142, threonine 143, glycine 144, asparagine 204, and asparagine 226. Position 69 (glutamate 69) interacts with Mg(2+).

It belongs to the tubulin family. Dimer of alpha and beta chains. A typical microtubule is a hollow water-filled tube with an outer diameter of 25 nm and an inner diameter of 15 nM. Alpha-beta heterodimers associate head-to-tail to form protofilaments running lengthwise along the microtubule wall with the beta-tubulin subunit facing the microtubule plus end conferring a structural polarity. Microtubules usually have 13 protofilaments but different protofilament numbers can be found in some organisms and specialized cells. The cofactor is Mg(2+).

The protein resides in the cytoplasm. It localises to the cytoskeleton. Tubulin is the major constituent of microtubules, a cylinder consisting of laterally associated linear protofilaments composed of alpha- and beta-tubulin heterodimers. Microtubules grow by the addition of GTP-tubulin dimers to the microtubule end, where a stabilizing cap forms. Below the cap, tubulin dimers are in GDP-bound state, owing to GTPase activity of alpha-tubulin. In Gossypium hirsutum (Upland cotton), this protein is Tubulin beta-7 chain.